We begin with the raw amino-acid sequence, 92 residues long: UPF0223 protein SPy_1248/M5005_Spy0958 (92 aa).

It belongs to the UPF0223 family.

The polypeptide is UPF0223 protein SPy_1248/M5005_Spy0958 (Streptococcus pyogenes serotype M1).